The following is a 429-amino-acid chain: Phosphoribosylamine--glycine ligase (429 aa).

An ATP-grasp domain is found at 109-316; that stretch reads KDFLARHKIP…LVELCLAACE (208 aa). Residue 135–196 coordinates ATP; sequence LREKGAPIVI…EEFLDGEEAS (62 aa). The segment at 212-236 is disordered; that stretch reads SQDHKRVGDKDTGPNTGGMGAYSPA. Over residues 213 to 223 the composition is skewed to basic and acidic residues; sequence QDHKRVGDKDT. Mg(2+) is bound by residues Glu-286 and Asn-288.

This sequence belongs to the GARS family. As to quaternary structure, monomer. It depends on Mg(2+) as a cofactor. The cofactor is Mn(2+).

The enzyme catalyses 5-phospho-beta-D-ribosylamine + glycine + ATP = N(1)-(5-phospho-beta-D-ribosyl)glycinamide + ADP + phosphate + H(+). It participates in purine metabolism; IMP biosynthesis via de novo pathway; N(1)-(5-phospho-D-ribosyl)glycinamide from 5-phospho-alpha-D-ribose 1-diphosphate: step 2/2. Functionally, catalyzes the reversible conversion of phosphoribosylamine to glycinamide ribonucleotide, an enzymatic step in purine biosynthesis pathway. The chain is Phosphoribosylamine--glycine ligase (purD) from Escherichia coli (strain K12).